A 224-amino-acid polypeptide reads, in one-letter code: 7-cyano-7-deazaguanine synthase (224 aa).

Residue 12–22 (LSGGLDSSTVT) coordinates ATP. Positions 193, 201, 204, and 207 each coordinate Zn(2+).

Belongs to the QueC family. It depends on Zn(2+) as a cofactor.

It carries out the reaction 7-carboxy-7-deazaguanine + NH4(+) + ATP = 7-cyano-7-deazaguanine + ADP + phosphate + H2O + H(+). It functions in the pathway purine metabolism; 7-cyano-7-deazaguanine biosynthesis. Functionally, catalyzes the ATP-dependent conversion of 7-carboxy-7-deazaguanine (CDG) to 7-cyano-7-deazaguanine (preQ(0)). In Prochlorococcus marinus subsp. pastoris (strain CCMP1986 / NIES-2087 / MED4), this protein is 7-cyano-7-deazaguanine synthase.